The following is a 563-amino-acid chain: Eukaryotic translation initiation factor 3 subunit D (563 aa).

Residues 95 to 136 (PGYMRNRNRFNQRGGYRRDNRGGRFQGQGGNMGMQNLSRGRD) are disordered. The segment at 294–308 (EFDLLTVGETANDLN) is RNA gate. Residues 528 to 563 (IPNSTFETDEEDDDDDEDDVENDDGDDEKDEGDGED) are disordered. Residues 534-563 (ETDEEDDDDDEDDVENDDGDDEKDEGDGED) are compositionally biased toward acidic residues.

It belongs to the eIF-3 subunit D family. Component of the eukaryotic translation initiation factor 3 (eIF-3) complex.

It is found in the cytoplasm. In terms of biological role, mRNA cap-binding component of the eukaryotic translation initiation factor 3 (eIF-3) complex, which is involved in protein synthesis of a specialized repertoire of mRNAs and, together with other initiation factors, stimulates binding of mRNA and methionyl-tRNAi to the 40S ribosome. The eIF-3 complex specifically targets and initiates translation of a subset of mRNAs involved in cell proliferation. In the eIF-3 complex, eif3d specifically recognizes and binds the 7-methylguanosine cap of a subset of mRNAs. In Nematostella vectensis (Starlet sea anemone), this protein is Eukaryotic translation initiation factor 3 subunit D.